Here is a 243-residue protein sequence, read N- to C-terminus: Pyridoxine 5'-phosphate synthase (243 aa).

Asn-9 contributes to the 3-amino-2-oxopropyl phosphate binding site. 11-12 (DH) is a binding site for 1-deoxy-D-xylulose 5-phosphate. Residue Arg-20 coordinates 3-amino-2-oxopropyl phosphate. The active-site Proton acceptor is the His-45. Positions 47 and 52 each coordinate 1-deoxy-D-xylulose 5-phosphate. Glu-72 serves as the catalytic Proton acceptor. Residue Thr-102 coordinates 1-deoxy-D-xylulose 5-phosphate. His-193 acts as the Proton donor in catalysis. Residues Gly-194 and 215-216 (GH) each bind 3-amino-2-oxopropyl phosphate.

The protein belongs to the PNP synthase family. In terms of assembly, homooctamer; tetramer of dimers.

It is found in the cytoplasm. It catalyses the reaction 3-amino-2-oxopropyl phosphate + 1-deoxy-D-xylulose 5-phosphate = pyridoxine 5'-phosphate + phosphate + 2 H2O + H(+). Its pathway is cofactor biosynthesis; pyridoxine 5'-phosphate biosynthesis; pyridoxine 5'-phosphate from D-erythrose 4-phosphate: step 5/5. Functionally, catalyzes the complicated ring closure reaction between the two acyclic compounds 1-deoxy-D-xylulose-5-phosphate (DXP) and 3-amino-2-oxopropyl phosphate (1-amino-acetone-3-phosphate or AAP) to form pyridoxine 5'-phosphate (PNP) and inorganic phosphate. The sequence is that of Pyridoxine 5'-phosphate synthase from Salmonella typhimurium (strain LT2 / SGSC1412 / ATCC 700720).